Consider the following 123-residue polypeptide: DNA-directed RNA polymerase subunit omega (123 aa).

The segment at 67–123 (EESAADSLSLGGFSTADVEAEVGGGPVQPDPGASQERAFDEAADGTAQGSGDPDPTT) is disordered.

It belongs to the RNA polymerase subunit omega family. As to quaternary structure, the RNAP catalytic core consists of 2 alpha, 1 beta, 1 beta' and 1 omega subunit. When a sigma factor is associated with the core the holoenzyme is formed, which can initiate transcription.

It catalyses the reaction RNA(n) + a ribonucleoside 5'-triphosphate = RNA(n+1) + diphosphate. Its function is as follows. Promotes RNA polymerase assembly. Latches the N- and C-terminal regions of the beta' subunit thereby facilitating its interaction with the beta and alpha subunits. The protein is DNA-directed RNA polymerase subunit omega of Halorhodospira halophila (strain DSM 244 / SL1) (Ectothiorhodospira halophila (strain DSM 244 / SL1)).